The chain runs to 273 residues: 3-methyl-2-oxobutanoate hydroxymethyltransferase (273 aa).

Positions 53 and 92 each coordinate Mg(2+). 3-methyl-2-oxobutanoate-binding positions include 53-54, Asp-92, and Lys-122; that span reads DS. Residue Glu-124 participates in Mg(2+) binding. Glu-191 (proton acceptor) is an active-site residue.

Belongs to the PanB family. As to quaternary structure, homodecamer; pentamer of dimers. It depends on Mg(2+) as a cofactor.

The protein resides in the cytoplasm. It carries out the reaction 3-methyl-2-oxobutanoate + (6R)-5,10-methylene-5,6,7,8-tetrahydrofolate + H2O = 2-dehydropantoate + (6S)-5,6,7,8-tetrahydrofolate. It functions in the pathway cofactor biosynthesis; (R)-pantothenate biosynthesis; (R)-pantoate from 3-methyl-2-oxobutanoate: step 1/2. Catalyzes the reversible reaction in which hydroxymethyl group from 5,10-methylenetetrahydrofolate is transferred onto alpha-ketoisovalerate to form ketopantoate. In Bacteroides thetaiotaomicron (strain ATCC 29148 / DSM 2079 / JCM 5827 / CCUG 10774 / NCTC 10582 / VPI-5482 / E50), this protein is 3-methyl-2-oxobutanoate hydroxymethyltransferase.